The primary structure comprises 269 residues: Formamidopyrimidine-DNA glycosylase (269 aa).

Proline 2 acts as the Schiff-base intermediate with DNA in catalysis. Glutamate 3 functions as the Proton donor in the catalytic mechanism. Residue lysine 57 is the Proton donor; for beta-elimination activity of the active site. DNA is bound by residues histidine 90, arginine 109, and lysine 150. The FPG-type zinc finger occupies 235-269 (QVYGRKGEPCRVCGTPIVATKHAQRATFYCRHCQK). Arginine 259 acts as the Proton donor; for delta-elimination activity in catalysis.

This sequence belongs to the FPG family. As to quaternary structure, monomer. It depends on Zn(2+) as a cofactor.

It catalyses the reaction Hydrolysis of DNA containing ring-opened 7-methylguanine residues, releasing 2,6-diamino-4-hydroxy-5-(N-methyl)formamidopyrimidine.. The enzyme catalyses 2'-deoxyribonucleotide-(2'-deoxyribose 5'-phosphate)-2'-deoxyribonucleotide-DNA = a 3'-end 2'-deoxyribonucleotide-(2,3-dehydro-2,3-deoxyribose 5'-phosphate)-DNA + a 5'-end 5'-phospho-2'-deoxyribonucleoside-DNA + H(+). Functionally, involved in base excision repair of DNA damaged by oxidation or by mutagenic agents. Acts as a DNA glycosylase that recognizes and removes damaged bases. Has a preference for oxidized purines, such as 7,8-dihydro-8-oxoguanine (8-oxoG). Has AP (apurinic/apyrimidinic) lyase activity and introduces nicks in the DNA strand. Cleaves the DNA backbone by beta-delta elimination to generate a single-strand break at the site of the removed base with both 3'- and 5'-phosphates. The sequence is that of Formamidopyrimidine-DNA glycosylase from Salmonella paratyphi C (strain RKS4594).